The primary structure comprises 344 residues: Nicotinate-nucleotide--dimethylbenzimidazole phosphoribosyltransferase (344 aa).

E310 (proton acceptor) is an active-site residue.

Belongs to the CobT family.

The enzyme catalyses 5,6-dimethylbenzimidazole + nicotinate beta-D-ribonucleotide = alpha-ribazole 5'-phosphate + nicotinate + H(+). It participates in nucleoside biosynthesis; alpha-ribazole biosynthesis; alpha-ribazole from 5,6-dimethylbenzimidazole: step 1/2. In terms of biological role, catalyzes the synthesis of alpha-ribazole-5'-phosphate from nicotinate mononucleotide (NAMN) and 5,6-dimethylbenzimidazole (DMB). The sequence is that of Nicotinate-nucleotide--dimethylbenzimidazole phosphoribosyltransferase from Chromobacterium violaceum (strain ATCC 12472 / DSM 30191 / JCM 1249 / CCUG 213 / NBRC 12614 / NCIMB 9131 / NCTC 9757 / MK).